Here is a 743-residue protein sequence, read N- to C-terminus: Sulfhydryl oxidase 1 (743 aa).

The signal sequence occupies residues 1–42 (MWRRRARSGGGGGGGGGGAAPRCRWWPAVLALLAAALPAARS). A Thioredoxin domain is found at 43–166 (RSLYSPSDPL…LRRAIITNLE (124 aa)). Active-site nucleophile residues include cysteine 80 and cysteine 83. 2 cysteine pairs are disulfide-bonded: cysteine 80–cysteine 83 and cysteine 111–cysteine 120. 5 N-linked (GlcNAc...) asparagine glycosylation sites follow: asparagine 254, asparagine 288, asparagine 295, asparagine 371, and asparagine 401. Cysteine 407 and cysteine 419 are oxidised to a cystine. An ERV/ALR sulfhydryl oxidase domain is found at 410–513 (SEPHFRGYPC…EDPQFPKLQW (104 aa)). Residues arginine 415, tryptophan 422, histidine 426, glutamate 461, histidine 465, 488–495 (WSHHNEVN), lysine 510, and tryptophan 513 each bind FAD. Cysteine 459 and cysteine 462 form a disulfide bridge. Residues cysteine 519 and cysteine 522 are joined by a disulfide bond. Residues 567–617 (ASARLSTAGLREKEEEERKEEEEEGEKETEKPHREGETGRPGSSELRRPSI) are disordered. Over residues 580–593 (EEEERKEEEEEGEK) the composition is skewed to acidic residues. Over residues 594 to 604 (ETEKPHREGET) the composition is skewed to basic and acidic residues. The helical transmembrane segment at 707-727 (SLCIALYFLSSMCLLGMYTFF) threads the bilayer.

Belongs to the quiescin-sulfhydryl oxidase (QSOX) family. FAD serves as cofactor. Post-translationally, N-glycosylated. O-glycosylated on Thr and Ser residues.

Its subcellular location is the golgi apparatus membrane. The protein resides in the secreted. It catalyses the reaction 2 R'C(R)SH + O2 = R'C(R)S-S(R)CR' + H2O2. Functionally, catalyzes the oxidation of sulfhydryl groups in peptide and protein thiols to disulfides with the reduction of oxygen to hydrogen peroxide. Plays a role in disulfide bond formation in a variety of extracellular proteins. In fibroblasts, required for normal incorporation of laminin into the extracellular matrix, and thereby for normal cell-cell adhesion and cell migration. The protein is Sulfhydryl oxidase 1 (QSOX1) of Gallus gallus (Chicken).